The sequence spans 782 residues: MFKSLTIKSNKVKPREENDENKQDPDPSNQPQQSTRQGENKSENKSLQTKMTPVTFEESHAKMQDKISEKNSLRDLTTNPNHQHPTESKGAMSEQKEMETGKEGLVSPKSKPLGVPVINEYADAQLHNLVRRMRQRTMLYKKKLAEGDISSPEASPQTAKPTAVPSTQESNAKLKEEHYYHILCFKFQKMPLTEYLKRFRLPGSIDSYTDRLYLLWLLLVTIAYNWNCWLIPLRLVFPYQTPDNTHYWFITDITCDIIYLCDMLLIQPRLQFIKGGDIMVDSNELKRHYRSSTKFQLDVASVMPFDVFYLFFGFNPVFRMNRILKYTSFFEFNHHLESIMDKAYIYRVIRTTGYLLYTLHINACIYYWASDYEGIGSTKWVYNGEGNKYLRCYYWAVRTLITIGGLPEPQTSFEIVFQLLNFFSGVFVFSSLIGQMQDVIGAATANQNNFRISMDHTISYMNTYSIPKNVQNRVRTWYEYTWDSQRMLDESDLLCTLPVTMQLALTVDVNLSIISKVELFKGCDTQMIYDMLLRLKSTVYLPGDFVCKKGEIGKEMYIIKQGEVQVLGGSDGAQVLVTLKAGAVFGEISLLAGRGGNRRTANVIAHGFANLLTLDKKTLQEILVHYPDSEKLLMKKASVLLKKKAPATETTPPRKGLAFLFPPKQETPKIFKALLGGTGKAGLTRLLKLKREQTIQKTSENSEEGGGKRREYEDKEREPSEKILDSSECRANCIIAEEMPQSIRRAALPRGTTRQSLIISMAPSAEAGEEVLTIEVKEKAKQ.

Disordered regions lie at residues 1–111 and 147–168; these read MFKS…PKSK and GDIS…PSTQ. Topologically, residues 1–213 are cytoplasmic; that stretch reads MFKSLTIKSN…SIDSYTDRLY (213 aa). 2 stretches are compositionally biased toward basic and acidic residues: residues 13 to 25 and 57 to 73; these read KPRE…KQDP and EESH…KNSL. 2 stretches are compositionally biased toward polar residues: residues 74 to 83 and 152 to 168; these read RDLTTNPNHQ and PEAS…PSTQ. The chain crosses the membrane as a helical span at residues 214-237; sequence LLWLLLVTIAYNWNCWLIPLRLVF. The Extracellular segment spans residues 238 to 244; sequence PYQTPDN. The chain crosses the membrane as a helical span at residues 245–265; the sequence is THYWFITDITCDIIYLCDMLL. The Cytoplasmic segment spans residues 266–294; sequence IQPRLQFIKGGDIMVDSNELKRHYRSSTK. Residues 295-312 form a helical membrane-spanning segment; sequence FQLDVASVMPFDVFYLFF. Topologically, residues 313–315 are extracellular; the sequence is GFN. Residues 316–330 form a helical membrane-spanning segment; that stretch reads PVFRMNRILKYTSFF. Over 331–343 the chain is Cytoplasmic; sequence EFNHHLESIMDKA. Positions 343 to 442 are ion conduction pathway; that stretch reads AYIYRVIRTT…IGQMQDVIGA (100 aa). The helical transmembrane segment at 344–366 threads the bilayer; the sequence is YIYRVIRTTGYLLYTLHINACIY. Topologically, residues 367–388 are extracellular; sequence YWASDYEGIGSTKWVYNGEGNK. Helical transmembrane passes span 389–415 and 416–440; these read YLRC…SFEI and VFQL…QDVI. The selectivity filter stretch occupies residues 402–405; sequence TIGG. Residues 441–782 lie on the Cytoplasmic side of the membrane; the sequence is GAATANQNNF…TIEVKEKAKQ (342 aa). The tract at residues 445 to 521 is C-linker; it reads ANQNNFRISM…SIISKVELFK (77 aa). Residues 525–641 form a cyclic nucleotide-binding domain region; it reads TQMIYDMLLR…LLMKKASVLL (117 aa). 3',5'-cyclic GMP is bound by residues G586, E587, R599, and T600. The tract at residues 692 to 724 is disordered; that stretch reads EQTIQKTSENSEEGGGKRREYEDKEREPSEKIL. Residues 705–724 show a composition bias toward basic and acidic residues; sequence GGGKRREYEDKEREPSEKIL.

This sequence belongs to the cyclic nucleotide-gated cation channel (TC 1.A.1.5) family. CNGB3 subfamily. As to quaternary structure, forms heterotetrameric channels composed of CNGA3 and CNGB3 subunits with 3:1 stoichiometry.

The protein resides in the cell membrane. It carries out the reaction Ca(2+)(in) = Ca(2+)(out). It catalyses the reaction Na(+)(in) = Na(+)(out). The catalysed reaction is K(+)(in) = K(+)(out). The enzyme catalyses NH4(+)(in) = NH4(+)(out). It carries out the reaction Rb(+)(in) = Rb(+)(out). It catalyses the reaction Li(+)(in) = Li(+)(out). The catalysed reaction is Cs(+)(in) = Cs(+)(out). Pore-forming subunit of the cone cyclic nucleotide-gated channel. Mediates cone photoresponses at bright light converting transient changes in intracellular cGMP levels into electrical signals. In the dark, cGMP levels are high and keep the channel open enabling a steady inward current carried by Na(+) and Ca(2+) ions that leads to membrane depolarization and neurotransmitter release from synaptic terminals. Upon photon absorption cGMP levels decline leading to channel closure and membrane hyperpolarization that ultimately slows neurotransmitter release and signals the presence of light, the end point of the phototransduction cascade. Conducts cGMP- and cAMP-gated ion currents, with permeability for monovalent and divalent cations. The sequence is that of Cyclic nucleotide-gated channel beta-3 from Canis lupus familiaris (Dog).